The sequence spans 197 residues: Phosphoheptose isomerase (197 aa).

The region spanning 37-197 is the SIS domain; the sequence is MLQCLMNDGK…CIDSVLLEGM (161 aa). 52–54 provides a ligand contact to substrate; the sequence is NGG. The Zn(2+) site is built by His61 and Glu65. Substrate contacts are provided by residues Glu65, 94–95, 120–122, Ser125, and Gln175; these read ND and STS. Positions 175 and 183 each coordinate Zn(2+).

Belongs to the SIS family. GmhA subfamily. Homotetramer. It depends on Zn(2+) as a cofactor.

The protein resides in the cytoplasm. It carries out the reaction 2 D-sedoheptulose 7-phosphate = D-glycero-alpha-D-manno-heptose 7-phosphate + D-glycero-beta-D-manno-heptose 7-phosphate. Its pathway is carbohydrate biosynthesis; D-glycero-D-manno-heptose 7-phosphate biosynthesis; D-glycero-alpha-D-manno-heptose 7-phosphate and D-glycero-beta-D-manno-heptose 7-phosphate from sedoheptulose 7-phosphate: step 1/1. In terms of biological role, catalyzes the isomerization of sedoheptulose 7-phosphate in D-glycero-D-manno-heptose 7-phosphate. The polypeptide is Phosphoheptose isomerase (Neisseria meningitidis serogroup C (strain 053442)).